We begin with the raw amino-acid sequence, 306 residues long: Dermonecrotic toxin LiSicTox-alphaIA1a (306 aa).

Positions 1 to 18 (MLPYIVLVLGCWSVLSQA) are cleaved as a signal peptide. Positions 19 to 26 (AQTDDEER) are excised as a propeptide. Residue H38 is part of the active site. E58 and D60 together coordinate Mg(2+). The active-site Nucleophile is H74. Disulfide bonds link C78/C84 and C80/C223. D118 is a Mg(2+) binding site.

The protein belongs to the arthropod phospholipase D family. Class II subfamily. Class IIa sub-subfamily. Requires Mg(2+) as cofactor. As to expression, expressed by the venom gland.

It is found in the secreted. The enzyme catalyses an N-(acyl)-sphingosylphosphocholine = an N-(acyl)-sphingosyl-1,3-cyclic phosphate + choline. It carries out the reaction an N-(acyl)-sphingosylphosphoethanolamine = an N-(acyl)-sphingosyl-1,3-cyclic phosphate + ethanolamine. The catalysed reaction is a 1-acyl-sn-glycero-3-phosphocholine = a 1-acyl-sn-glycero-2,3-cyclic phosphate + choline. It catalyses the reaction a 1-acyl-sn-glycero-3-phosphoethanolamine = a 1-acyl-sn-glycero-2,3-cyclic phosphate + ethanolamine. The enzyme catalyses 1-hexadecanoyl-sn-glycero-3-phosphocholine = 1-hexadecanoyl-sn-glycero-2,3-cyclic phosphate + choline. Catalytic activity and hemolysis are inhibited by divalent ion chelators (1,10-phenanthroline, EDTA, and EGTA). In terms of biological role, dermonecrotic toxins cleave the phosphodiester linkage between the phosphate and headgroup of certain phospholipids (sphingolipid and lysolipid substrates), forming an alcohol (often choline) and a cyclic phosphate. This toxin acts on sphingomyelin (SM) with high activity. It discriminate between the number of carbon atoms in the substrates, since it prefers SM with six carbons in the fatty acid chain (SM6:0) to other SMs (SM12:0 &gt; SM16:0 &gt; SM18:0 &gt; SM2:0 &gt; SM24:0). It also acts on lysophosphatidylcholine (LPC) (LPC16:0 = LPC12:0 &gt; LPC18:0), and lyso-platelet activating factor (LPAF, an alkyl-LPC) but not on phosphatidylcholine (PC). It may also act on ceramide phosphoethanolamine (CPE), lysophosphatidylcholine (LPC) and lysophosphatidylethanolamine (LPE), but not on lysophosphatidylserine (LPS), and lysophosphatidylglycerol (LPG). It acts by transphosphatidylation, releasing exclusively cyclic phosphate products as second products. In vivo, it induces dermonecrosis, vascular permeability, platelet aggregation, inflammatory response, edema and cytotoxicity against renal epithelial cells. It causes direct nephrotoxicity and is directly toxic to liver. It also induces hemolysis in a complement-dependent manner as well as in a complement-independent manner. The hemolysis provoked in a complement-independent manner is composed of several steps. The toxin binds to erythrocyte membranes, hydrolyzes membrane phospholipids (SM and LPC) thus generating metabolism products that cause hemolysis, probably by provoking an increase of calcium inside cells. The calcium influx is due to the opening of L-type calcium channels, since L-type calcium channel blockers inhibit calcium influx. Is lethal to mice when intraperitoneally injected. The chain is Dermonecrotic toxin LiSicTox-alphaIA1a from Loxosceles intermedia (Brown spider).